A 368-amino-acid polypeptide reads, in one-letter code: Ribulose bisphosphate carboxylase-like protein 1 (368 aa).

The protein belongs to the RuBisCO large chain family. Type IV subfamily.

Unknown. Probably does not have RuBisCO activity. The protein is Ribulose bisphosphate carboxylase-like protein 1 (rlp1) of Rhodopseudomonas palustris (strain ATCC BAA-98 / CGA009).